Reading from the N-terminus, the 223-residue chain is MHFLIPAAGSGSRMKAGKNKLLIDLEGESLIYWTLKSVLSANSTNWVGIIGQPKDKNLLLNSAKDFAQKVHWINGGDTRQQSVFNGLEALPKDAKKVLIHDGARCLINPELIDLCAKQLDENEAVILATKVTDTIKIVDKEGFIKETPDRNYLWAAQTPQGFLVDRLKKAHKMAIDKKWKVTDDASLFEILNWKVKIIEGTYSNIKITSPIDLKIAKLFVKNP.

The protein belongs to the IspD/TarI cytidylyltransferase family. IspD subfamily.

It catalyses the reaction 2-C-methyl-D-erythritol 4-phosphate + CTP + H(+) = 4-CDP-2-C-methyl-D-erythritol + diphosphate. Its pathway is isoprenoid biosynthesis; isopentenyl diphosphate biosynthesis via DXP pathway; isopentenyl diphosphate from 1-deoxy-D-xylulose 5-phosphate: step 2/6. In terms of biological role, catalyzes the formation of 4-diphosphocytidyl-2-C-methyl-D-erythritol from CTP and 2-C-methyl-D-erythritol 4-phosphate (MEP). The protein is 2-C-methyl-D-erythritol 4-phosphate cytidylyltransferase of Prochlorococcus marinus (strain AS9601).